The following is a 155-amino-acid chain: MSEAKNGPEYASFFAVMGASAAMVFSALGAAYGTAKSGTGIAAMSVMRPEMIMKSIIPVVMAGIIAIYGLVVAVLIANSLNDGISLYRSFLQLGAGLSVGLSGLAAGFAIGIVGDAGVRGTAQQPRLFVGMILILIFAEVLGLYGLIVALILSTK.

Topologically, residues 1–10 are lumenal; that stretch reads MSEAKNGPEY. The helical transmembrane segment at 11–33 threads the bilayer; sequence ASFFAVMGASAAMVFSALGAAYG. The Cytoplasmic segment spans residues 34–55; the sequence is TAKSGTGIAAMSVMRPEMIMKS. A helical membrane pass occupies residues 56–76; the sequence is IIPVVMAGIIAIYGLVVAVLI. At 77-92 the chain is on the lumenal side; it reads ANSLNDGISLYRSFLQ. The chain crosses the membrane as a helical span at residues 93-114; the sequence is LGAGLSVGLSGLAAGFAIGIVG. Residues 115–131 lie on the Cytoplasmic side of the membrane; it reads DAGVRGTAQQPRLFVGM. Residues 132–152 traverse the membrane as a helical segment; that stretch reads ILILIFAEVLGLYGLIVALIL. Residues 153–155 are Lumenal-facing; it reads STK.

This sequence belongs to the V-ATPase proteolipid subunit family. As to quaternary structure, V-ATPase is a heteromultimeric enzyme made up of two complexes: the ATP-hydrolytic V1 complex and the proton translocation V0 complex. The V1 complex consists of three catalytic AB heterodimers that form a heterohexamer, three peripheral stalks each consisting of EG heterodimers, one central rotor including subunits D and F, and the regulatory subunits C and H. The proton translocation complex V0 consists of the proton transport subunit a, a ring of proteolipid subunits c9c'', rotary subunit d, subunits e and f, and the accessory subunits ATP6AP1/Ac45 and ATP6AP2/PRR. Interacts with the V0 complex V-ATPase subunit a4 ATP6V0A4. Interacts with LASS2. Interacts with RNF182; this interaction leads to ubiquitination and degradation via the proteasome pathway. Post-translationally, ubiquitinated by RNF182, leading to its degradation via the ubiquitin-proteasome pathway. Expressed in brain (at protein level).

Its subcellular location is the cytoplasmic vesicle. It is found in the clathrin-coated vesicle membrane. The protein resides in the secretory vesicle. The protein localises to the synaptic vesicle membrane. Proton-conducting pore forming subunit of the V0 complex of vacuolar(H+)-ATPase (V-ATPase), a multisubunit enzyme composed of a peripheral complex (V1) that hydrolyzes ATP and a membrane integral complex (V0) that translocates protons. V-ATPase is responsible for acidifying and maintaining the pH of intracellular compartments and in some cell types, is targeted to the plasma membrane, where it is responsible for acidifying the extracellular environment. This is V-type proton ATPase 16 kDa proteolipid subunit c (ATP6V0C) from Bos taurus (Bovine).